The primary structure comprises 78 residues: Large ribosomal subunit protein bL28 (78 aa).

The segment at M1–A21 is disordered.

This sequence belongs to the bacterial ribosomal protein bL28 family.

The protein is Large ribosomal subunit protein bL28 of Cellvibrio japonicus (strain Ueda107) (Pseudomonas fluorescens subsp. cellulosa).